The sequence spans 1196 residues: DNA polymerase beta (1196 aa).

The protein belongs to the DNA polymerase type-B family.

It carries out the reaction DNA(n) + a 2'-deoxyribonucleoside 5'-triphosphate = DNA(n+1) + diphosphate. In terms of biological role, DNA-directed DNA polymerase involved in viral DNA replication. In African swine fever virus (isolate Pig/Kenya/KEN-50/1950) (ASFV), this protein is DNA polymerase beta.